The chain runs to 144 residues: uncharacterized protein (144 aa).

The segment at 1-24 (MGKVIQFPFGEEPEKKEEKELKTE) is disordered. Over residues 12 to 24 (EPEKKEEKELKTE) the composition is skewed to basic and acidic residues.

This is an uncharacterized protein from Aquifex aeolicus (strain VF5).